A 464-amino-acid chain; its full sequence is Methylenetetrahydrofolate--tRNA-(uracil-5-)-methyltransferase TrmFO (464 aa).

Position 13–18 (13–18 (GGGLAG)) interacts with FAD.

This sequence belongs to the MnmG family. TrmFO subfamily. It depends on FAD as a cofactor.

The protein resides in the cytoplasm. It carries out the reaction uridine(54) in tRNA + (6R)-5,10-methylene-5,6,7,8-tetrahydrofolate + NADH + H(+) = 5-methyluridine(54) in tRNA + (6S)-5,6,7,8-tetrahydrofolate + NAD(+). It catalyses the reaction uridine(54) in tRNA + (6R)-5,10-methylene-5,6,7,8-tetrahydrofolate + NADPH + H(+) = 5-methyluridine(54) in tRNA + (6S)-5,6,7,8-tetrahydrofolate + NADP(+). Catalyzes the folate-dependent formation of 5-methyl-uridine at position 54 (M-5-U54) in all tRNAs. This Bartonella bacilliformis (strain ATCC 35685 / KC583 / Herrer 020/F12,63) protein is Methylenetetrahydrofolate--tRNA-(uracil-5-)-methyltransferase TrmFO.